A 65-amino-acid chain; its full sequence is Conotoxin TsMRCL-05 (65 aa).

The N-terminal stretch at 1–22 (MHCLPVLVILLLLIASTPSVDA) is a signal peptide. Positions 23-52 (RPNPKDDVPLASFHGAVNAKRYLRTLWNSR) are excised as a propeptide. Ile64 carries the post-translational modification Isoleucine amide.

Belongs to the conotoxin T superfamily. Contains 2 disulfide bonds that can be either 'C1-C3, C2-C4' or 'C1-C4, C2-C3', since these disulfide connectivities have been observed for conotoxins with cysteine framework V (for examples, see AC P0DQQ7 and AC P81755). Expressed by the venom duct.

The protein resides in the secreted. The polypeptide is Conotoxin TsMRCL-05 (Conus tessulatus (Tessellate cone)).